The chain runs to 98 residues: NADH-ubiquinone oxidoreductase chain 4L (98 aa).

3 consecutive transmembrane segments (helical) span residues 1–21, 29–49, and 61–81; these read MSLVHINILMAFTMSLTGLLM, ALLCLEGMVLSLFILATLTIL, and IILLVFAACEAAIGLALLIMI.

The protein belongs to the complex I subunit 4L family. Core subunit of respiratory chain NADH dehydrogenase (Complex I) which is composed of 45 different subunits.

It is found in the mitochondrion inner membrane. The enzyme catalyses a ubiquinone + NADH + 5 H(+)(in) = a ubiquinol + NAD(+) + 4 H(+)(out). Its function is as follows. Core subunit of the mitochondrial membrane respiratory chain NADH dehydrogenase (Complex I) which catalyzes electron transfer from NADH through the respiratory chain, using ubiquinone as an electron acceptor. Part of the enzyme membrane arm which is embedded in the lipid bilayer and involved in proton translocation. The protein is NADH-ubiquinone oxidoreductase chain 4L (MT-ND4L) of Monodon monoceros (Narwhal).